The sequence spans 106 residues: PTS system fructose-like EIIB component 2 (106 aa).

The PTS EIIB type-2 domain occupies 1–103; it reads MTKIIAVTAC…IMSKIEAHLA (103 aa). The active-site Phosphocysteine intermediate is the C10. C10 carries the phosphocysteine; by EIIA modification.

It localises to the cytoplasm. The catalysed reaction is D-fructose(out) + N(pros)-phospho-L-histidyl-[protein] = D-fructose 1-phosphate(in) + L-histidyl-[protein]. Functionally, the phosphoenolpyruvate-dependent sugar phosphotransferase system (sugar PTS), a major carbohydrate active transport system, catalyzes the phosphorylation of incoming sugar substrates concomitantly with their translocation across the cell membrane. The enzyme II FrwABC PTS system is involved in fructose transport. This chain is PTS system fructose-like EIIB component 2 (frwB), found in Escherichia coli O157:H7.